A 253-amino-acid polypeptide reads, in one-letter code: tRNA pseudouridine synthase A (253 aa).

The active-site Nucleophile is the aspartate 52. Tyrosine 111 is a substrate binding site.

The protein belongs to the tRNA pseudouridine synthase TruA family. In terms of assembly, homodimer.

It catalyses the reaction uridine(38/39/40) in tRNA = pseudouridine(38/39/40) in tRNA. In terms of biological role, formation of pseudouridine at positions 38, 39 and 40 in the anticodon stem and loop of transfer RNAs. In Methylobacterium radiotolerans (strain ATCC 27329 / DSM 1819 / JCM 2831 / NBRC 15690 / NCIMB 10815 / 0-1), this protein is tRNA pseudouridine synthase A.